The following is a 218-amino-acid chain: External core antigen (218 aa).

Positions 1 to 20 (MYLFHLCLVFACVPCPTVQA) are cleaved as a signal peptide. Positions 26–28 (GWL) are HBEAG. Basic residues predominate over residues 180-211 (RRRGGARASRSPRRRTPSPRRRRSQSPRRRRS). Positions 180-218 (RRRGGARASRSPRRRTPSPRRRRSQSPRRRRSQSPSANC) are disordered. The stretch at 190–196 (SPRRRTP) is one 1; half-length repeat. The tract at residues 190 to 212 (SPRRRTPSPRRRRSQSPRRRRSQ) is 3 X 8 AA repeats of S-P-R-R-R-R-S-Q. The propeptide occupies 190 to 218 (SPRRRTPSPRRRRSQSPRRRRSQSPSANC). 2 consecutive repeat copies span residues 197–204 (SPRRRRSQ) and 205–212 (SPRRRRSQ).

This sequence belongs to the orthohepadnavirus precore antigen family. As to quaternary structure, homodimerizes. In terms of processing, phosphorylated. Post-translationally, cleaved by host furin.

The protein localises to the secreted. It localises to the host nucleus. In terms of biological role, may regulate immune response to the intracellular capsid in acting as a T-cell tolerogen, by having an immunoregulatory effect which prevents destruction of infected cells by cytotoxic T-cells. This immune regulation may predispose to chronicity during perinatal infections and prevent severe liver injury during adult infections. This is External core antigen from Woodchuck hepatitis B virus (isolate 1) (WHV).